The chain runs to 945 residues: Valine--tRNA ligase (945 aa).

Residues 42–52 (PNVTGTLHMGH) carry the 'HIGH' region motif. The 'KMSKS' region motif lies at 552 to 556 (KMSKS). ATP is bound at residue Lys-555. Residues 879–945 (DKAAETARLS…VQNQLAKLKD (67 aa)) adopt a coiled-coil conformation.

This sequence belongs to the class-I aminoacyl-tRNA synthetase family. ValS type 1 subfamily. As to quaternary structure, monomer.

The protein localises to the cytoplasm. The catalysed reaction is tRNA(Val) + L-valine + ATP = L-valyl-tRNA(Val) + AMP + diphosphate. Functionally, catalyzes the attachment of valine to tRNA(Val). As ValRS can inadvertently accommodate and process structurally similar amino acids such as threonine, to avoid such errors, it has a 'posttransfer' editing activity that hydrolyzes mischarged Thr-tRNA(Val) in a tRNA-dependent manner. This chain is Valine--tRNA ligase, found in Neisseria gonorrhoeae (strain ATCC 700825 / FA 1090).